The primary structure comprises 157 residues: MSWAKQRVPFLDDDDGEEENDVQDDVDSPVPTRPLVIDEDAEPAAGTSGGLEGGGGDDEDGEDGHALPDLDDDLLLQFEPMLPRVYDLLLPSLDARLNFVNAGQKYAAFLKYVHGDCATCSHGEILREKTQLLTAIVSKLMDINGILEGKDEPAPGK.

A disordered region spans residues 1-69 (MSWAKQRVPF…DGEDGHALPD (69 aa)). The span at 11–27 (LDDDDGEEENDVQDDVD) shows a compositional bias: acidic residues.

It belongs to the herpesviridae TRM2 protein family. In terms of assembly, associates with TRM1 and TRM3 to form the tripartite terminase complex.

Its subcellular location is the host nucleus. Its function is as follows. Component of the molecular motor that translocates viral genomic DNA in empty capsid during DNA packaging. Forms a tripartite terminase complex together with TRM1 and TRM3 in the host cytoplasm. Once the complex reaches the host nucleus, it interacts with the capsid portal vertex. This portal forms a ring in which genomic DNA is translocated into the capsid. The polypeptide is Tripartite terminase subunit 2 (Homo sapiens (Human)).